Reading from the N-terminus, the 104-residue chain is uncharacterized protein (104 aa).

The segment covering 58–71 has biased composition (basic and acidic residues); the sequence is PERDRARRDRDHHP. Positions 58 to 84 are disordered; it reads PERDRARRDRDHHPWSRSRSQLSPRMA.

This is an uncharacterized protein from Mycobacterium tuberculosis (strain ATCC 25618 / H37Rv).